Consider the following 204-residue polypeptide: Peptide deformylase (204 aa).

Fe cation is bound by residues cysteine 131 and histidine 174. Glutamate 175 is a catalytic residue. Histidine 178 is a binding site for Fe cation.

Belongs to the polypeptide deformylase family. Fe(2+) is required as a cofactor.

The enzyme catalyses N-terminal N-formyl-L-methionyl-[peptide] + H2O = N-terminal L-methionyl-[peptide] + formate. Its function is as follows. Removes the formyl group from the N-terminal Met of newly synthesized proteins. Requires at least a dipeptide for an efficient rate of reaction. N-terminal L-methionine is a prerequisite for activity but the enzyme has broad specificity at other positions. The chain is Peptide deformylase from Streptococcus equi subsp. zooepidemicus (strain H70).